A 412-amino-acid polypeptide reads, in one-letter code: Argininosuccinate synthase (412 aa).

Residues 11–19 (AYSGGLDTS) and Ala37 contribute to the ATP site. L-citrulline is bound by residues Tyr88 and Ser93. 116–124 (SHGATGKGN) is a binding site for ATP. Thr120, Asn124, and Asp125 together coordinate L-aspartate. Position 124 (Asn124) interacts with L-citrulline. 5 residues coordinate L-citrulline: Arg128, Ser181, Ser190, Glu271, and Tyr283.

This sequence belongs to the argininosuccinate synthase family. In terms of assembly, homotetramer.

The protein resides in the cytoplasm. The protein localises to the cytosol. It catalyses the reaction L-citrulline + L-aspartate + ATP = 2-(N(omega)-L-arginino)succinate + AMP + diphosphate + H(+). It functions in the pathway amino-acid biosynthesis; L-arginine biosynthesis; L-arginine from L-ornithine and carbamoyl phosphate: step 2/3. It participates in nitrogen metabolism; urea cycle; (N(omega)-L-arginino)succinate from L-aspartate and L-citrulline: step 1/1. Its function is as follows. One of the enzymes of the urea cycle, the metabolic pathway transforming neurotoxic amonia produced by protein catabolism into inocuous urea in the liver of ureotelic animals. Catalyzes the formation of arginosuccinate from aspartate, citrulline and ATP and together with ASL it is responsible for the biosynthesis of arginine in most body tissues. This Xenopus tropicalis (Western clawed frog) protein is Argininosuccinate synthase.